Reading from the N-terminus, the 411-residue chain is Tetra-peptide repeat homeobox protein 1 (411 aa).

A DNA-binding region (homeobox) is located at residues Ser3–Arg24. 4 disordered regions span residues Leu20 to Leu63, Ile88 to Pro246, Pro286 to Ala340, and Leu363 to Leu411. Positions Gln27 to Pro55 are enriched in low complexity. Composition is skewed to pro residues over residues Gly95–Ile139 and Phe149–Pro246. Low complexity predominate over residues Ser295–Gly307. Over residues Ala319 to Pro335 the composition is skewed to pro residues. Polar residues-rich tracts occupy residues Ser366–Gln376 and Gly388–His402.

The protein belongs to the paired homeobox family.

It localises to the nucleus. Its function is as follows. Transcription factor expressed after fertilization required for zygotic genome activation (ZGA), a critical event in early embryonic development during which the developmental control passes from maternally provided mRNAs to the expression of the zygotic genome after fertilization. Binds and activates expression of key ZGA marker genes, such as NANOGNB, ZSCAN4, DUXB, KLF5 and DPPA3. Binds to regulatory DNA sequences containing a 5'-TAATCC-3' sequence motif. The polypeptide is Tetra-peptide repeat homeobox protein 1 (Homo sapiens (Human)).